A 232-amino-acid chain; its full sequence is Caffeoyl-CoA O-methyltransferase (232 aa).

Lysine 6 serves as a coordination point for substrate. S-adenosyl-L-methionine contacts are provided by residues threonine 48, glutamate 70, 72-73 (GV), serine 78, aspartate 96, and alanine 125. Aspartate 148 lines the substrate pocket. Aspartate 148 provides a ligand contact to a divalent metal cation. Aspartate 150 is a binding site for S-adenosyl-L-methionine. Residues aspartate 174 and asparagine 175 each coordinate a divalent metal cation. Asparagine 179 lines the substrate pocket.

Belongs to the class I-like SAM-binding methyltransferase superfamily. Cation-dependent O-methyltransferase family. CCoAMT subfamily. Requires a divalent metal cation as cofactor.

It carries out the reaction (E)-caffeoyl-CoA + S-adenosyl-L-methionine = (E)-feruloyl-CoA + S-adenosyl-L-homocysteine + H(+). Its pathway is aromatic compound metabolism; phenylpropanoid biosynthesis. In terms of biological role, methylates caffeoyl-CoA to feruloyl-CoA and 5-hydroxyferuloyl-CoA to sinapoyl-CoA. Plays a role in the synthesis of feruloylated polysaccharides. Involved in the reinforcement of the plant cell wall. Also involved in the responding to wounding or pathogen challenge by the increased formation of cell wall-bound ferulic acid polymers. The polypeptide is Caffeoyl-CoA O-methyltransferase (Citrus natsudaidai (Natsudaidai orange)).